A 300-amino-acid chain; its full sequence is Dihydroorotate dehydrogenase B (NAD(+)), catalytic subunit (300 aa).

Residues Ser-20 and 44–45 (KS) each bind FMN. Substrate contacts are provided by residues Lys-44, 68–72 (NAMGL), and Asn-122. Asn-122 serves as a coordination point for FMN. Cys-125 acts as the Nucleophile in catalysis. Positions 160 and 186 each coordinate FMN. 187–188 (NT) provides a ligand contact to substrate. Residues Gly-212, 238-239 (GG), and 260-261 (GT) each bind FMN.

The protein belongs to the dihydroorotate dehydrogenase family. Type 1 subfamily. Heterotetramer of 2 PyrK and 2 PyrD type B subunits. The cofactor is FMN.

The protein resides in the cytoplasm. The catalysed reaction is (S)-dihydroorotate + NAD(+) = orotate + NADH + H(+). The protein operates within pyrimidine metabolism; UMP biosynthesis via de novo pathway; orotate from (S)-dihydroorotate (NAD(+) route): step 1/1. Its function is as follows. Catalyzes the conversion of dihydroorotate to orotate with NAD(+) as electron acceptor. This is Dihydroorotate dehydrogenase B (NAD(+)), catalytic subunit (pyrD) from Pyrococcus furiosus (strain ATCC 43587 / DSM 3638 / JCM 8422 / Vc1).